Consider the following 552-residue polypeptide: Urocanate hydratase (552 aa).

Residues G48–G49, Q126, G172–G174, D192, N238–A239, Q259–H263, Y268–L269, and Y317 each bind NAD(+). C405 is a catalytic residue. G487 serves as a coordination point for NAD(+).

This sequence belongs to the urocanase family. It depends on NAD(+) as a cofactor.

It localises to the cytoplasm. The enzyme catalyses 4-imidazolone-5-propanoate = trans-urocanate + H2O. Its pathway is amino-acid degradation; L-histidine degradation into L-glutamate; N-formimidoyl-L-glutamate from L-histidine: step 2/3. Catalyzes the conversion of urocanate to 4-imidazolone-5-propionate. In Streptomyces griseus subsp. griseus (strain JCM 4626 / CBS 651.72 / NBRC 13350 / KCC S-0626 / ISP 5235), this protein is Urocanate hydratase.